Consider the following 197-residue polypeptide: Probable GTP-binding protein EngB (197 aa).

The 174-residue stretch at 22–195 (ELPEVALAGR…WKAIYALITE (174 aa)) folds into the EngB-type G domain. Residues 30–37 (GRSNVGKS), 57–61 (GKTQT), 75–78 (DVPG), 142–145 (TKLD), and 174–176 (FSA) each bind GTP. The Mg(2+) site is built by Ser-37 and Thr-59.

The protein belongs to the TRAFAC class TrmE-Era-EngA-EngB-Septin-like GTPase superfamily. EngB GTPase family. Mg(2+) is required as a cofactor.

Functionally, necessary for normal cell division and for the maintenance of normal septation. The chain is Probable GTP-binding protein EngB from Exiguobacterium sp. (strain ATCC BAA-1283 / AT1b).